The sequence spans 116 residues: G antigen 2A (116 aa).

The disordered stretch occupies residues 1-116; sequence MSWRGRSTYR…PEEGEKQSQC (116 aa). 2 stretches are compositionally biased toward acidic residues: residues 31-44 and 86-95; these read FSDE…EEGE and ECEDGPDGQE. Positions 102–116 are enriched in basic and acidic residues; that stretch reads EEVKTPEEGEKQSQC.

Belongs to the GAGE family.

This Homo sapiens (Human) protein is G antigen 2A (GAGE2A).